The sequence spans 365 residues: Phospho-N-acetylmuramoyl-pentapeptide-transferase (365 aa).

11 consecutive transmembrane segments (helical) span residues 15-35 (WPAA…DRLI), 39-59 (LLSL…WWGV), 84-104 (GTPT…GGLV), 114-134 (LLAI…DDWS), 156-176 (AAVL…TVSL), 178-198 (FNLD…VFLA), 209-229 (LDGL…LQLM), 235-255 (GDPA…GFLI), 263-283 (VFMG…VALL), 291-311 (LLMG…VWVF), and 343-363 (VVVP…LGLH).

It belongs to the glycosyltransferase 4 family. MraY subfamily. Mg(2+) serves as cofactor.

The protein resides in the cell inner membrane. It catalyses the reaction UDP-N-acetyl-alpha-D-muramoyl-L-alanyl-gamma-D-glutamyl-meso-2,6-diaminopimeloyl-D-alanyl-D-alanine + di-trans,octa-cis-undecaprenyl phosphate = di-trans,octa-cis-undecaprenyl diphospho-N-acetyl-alpha-D-muramoyl-L-alanyl-D-glutamyl-meso-2,6-diaminopimeloyl-D-alanyl-D-alanine + UMP. Its pathway is cell wall biogenesis; peptidoglycan biosynthesis. Its function is as follows. Catalyzes the initial step of the lipid cycle reactions in the biosynthesis of the cell wall peptidoglycan: transfers peptidoglycan precursor phospho-MurNAc-pentapeptide from UDP-MurNAc-pentapeptide onto the lipid carrier undecaprenyl phosphate, yielding undecaprenyl-pyrophosphoryl-MurNAc-pentapeptide, known as lipid I. This is Phospho-N-acetylmuramoyl-pentapeptide-transferase from Synechococcus sp. (strain WH7803).